The sequence spans 196 residues: Large ribosomal subunit protein eL15 (196 aa).

The interval 162-196 (RGLTNAGRSNRGLQNRGKGAEHTRPSAGSGSRRGK) is disordered.

The protein belongs to the eukaryotic ribosomal protein eL15 family.

The chain is Large ribosomal subunit protein eL15 from Haloquadratum walsbyi (strain DSM 16790 / HBSQ001).